The sequence spans 157 residues: MLGKEIGKDQRQKRIQDIILRESVSTQAELVKLLAKEGVQVTQATVSRDINELRLVRVPIGKGRHRYALAQYGGDSDIEEQLARLFQSFVQDVDRGENILVIRTADGHASGVALLLDRWKRDDIVGTLAGEDTIMVVARSTHDGESLMEEFNALMLG.

This sequence belongs to the ArgR family.

It localises to the cytoplasm. The protein operates within amino-acid biosynthesis; L-arginine biosynthesis [regulation]. Its function is as follows. Regulates arginine biosynthesis genes. In Deinococcus radiodurans (strain ATCC 13939 / DSM 20539 / JCM 16871 / CCUG 27074 / LMG 4051 / NBRC 15346 / NCIMB 9279 / VKM B-1422 / R1), this protein is Arginine repressor.